A 300-amino-acid chain; its full sequence is MTENTSTRCGYVAIVGRPNVGKSTLLNHILGQKLAITSRKPQTTRHNMLGIKTEGDVQAIYVDTPGMHKANDKALNRYMNRNASAALKDVDVVIFVVDRTRWTDEDQLVLERVQYVTGPLIIAVNKTDRMEEKAELIPHLQWLQEQLPNAEVMPISAQQGHNLDALEAQIAKHLPENDHFFPEDQITDRSSRFLAAELVREKIMRQLGAELPYQITVEIEEFKQQGHVLHIHALILVERDGQKKIIIGDKGERIKRIGSEARKDMEVLFDSKVMLNLWVKVKGGWSDDERALRSLGYGDL.

The Era-type G domain occupies 8–176 (RCGYVAIVGR…EAQIAKHLPE (169 aa)). The tract at residues 16–23 (GRPNVGKS) is G1. Position 16-23 (16-23 (GRPNVGKS)) interacts with GTP. The segment at 42 to 46 (QTTRH) is G2. Residues 63–66 (DTPG) are G3. GTP contacts are provided by residues 63-67 (DTPGM) and 125-128 (NKTD). The segment at 125–128 (NKTD) is G4. The interval 155 to 157 (ISA) is G5. Positions 199 to 283 (VREKIMRQLG…MLNLWVKVKG (85 aa)) constitute a KH type-2 domain.

The protein belongs to the TRAFAC class TrmE-Era-EngA-EngB-Septin-like GTPase superfamily. Era GTPase family. Monomer.

The protein resides in the cytoplasm. The protein localises to the cell inner membrane. An essential GTPase that binds both GDP and GTP, with rapid nucleotide exchange. Plays a role in 16S rRNA processing and 30S ribosomal subunit biogenesis and possibly also in cell cycle regulation and energy metabolism. The sequence is that of GTPase Era from Pseudomonas entomophila (strain L48).